The chain runs to 380 residues: MAIDPIKLSQELISFPSITPTDNGAIDFLSNTLSQYGFTCHVLTFGDDQVQVRNLYAQLGNGSPNLCFAGHTDVVPTGDSEKWKFDPFSGKIEDNILYGRGVVDMKSAICAFVAAVSRIDFNQINGSISFLISGDEEGNYFKYGTPAVLKWLTDNNKKIDFCLVGEPTSQSSVGDTIKIGRRGSINFKIVCNGVQGHVAYPHLAENPVDNMISILYKISNTVLDNGNEYFQPSNCEITSVDVGNTATNVIPDKITANLNIRYNDMHTSESLFNIINNICAEITEKYELFTAVSGSSFITHPGKHSDMLSSAIKKVTGQDAILSTSGGTSDARFIKDFCPVIELGLSNETAHKINEHAPVDDIYKLTDIYEEFIRQFFNIS.

Histidine 71 provides a ligand contact to Zn(2+). Aspartate 73 is a catalytic residue. Aspartate 104 provides a ligand contact to Zn(2+). Glutamate 136 functions as the Proton acceptor in the catalytic mechanism. Glutamate 137, glutamate 166, and histidine 351 together coordinate Zn(2+).

The protein belongs to the peptidase M20A family. DapE subfamily. As to quaternary structure, homodimer. It depends on Zn(2+) as a cofactor. The cofactor is Co(2+).

The catalysed reaction is N-succinyl-(2S,6S)-2,6-diaminopimelate + H2O = (2S,6S)-2,6-diaminopimelate + succinate. Its pathway is amino-acid biosynthesis; L-lysine biosynthesis via DAP pathway; LL-2,6-diaminopimelate from (S)-tetrahydrodipicolinate (succinylase route): step 3/3. Functionally, catalyzes the hydrolysis of N-succinyl-L,L-diaminopimelic acid (SDAP), forming succinate and LL-2,6-diaminopimelate (DAP), an intermediate involved in the bacterial biosynthesis of lysine and meso-diaminopimelic acid, an essential component of bacterial cell walls. The polypeptide is Succinyl-diaminopimelate desuccinylase (Ehrlichia canis (strain Jake)).